The sequence spans 855 residues: Circadian locomoter output cycles protein kaput (855 aa).

The Nuclear localization signal motif lies at 32 to 47; it reads DKAKRVSRNKSEKKRR. Residues 34-84 enclose the bHLH domain; it reads AKRVSRNKSEKKRRDQFNVLIKELGSMLPGNARKMDKSTVLQKSIDFLRKH. Phosphoserine is present on residues serine 38 and serine 42. Residue lysine 67 forms a Glycyl lysine isopeptide (Lys-Gly) (interchain with G-Cter in SUMO1) linkage. PAS domains follow at residues 107–177 and 262–332; these read NEEF…LLES and FIKE…MQYG. A PAC domain is found at 336-379; sequence SCYYRFLTKGQQWIWLQTHYYITYHQWNSRPEFIVCTHTVVSYA. An interaction with NR3C1 region spans residues 371–854; sequence CTHTVVSYAE…SLTDPSKVQP (484 aa). Disordered stretches follow at residues 392-411 and 420-497; these read EESL…SDNR and ALER…LTQP. A Phosphoserine modification is found at serine 408. Serine 427 bears the Phosphoserine; by GSK3-beta mark. Phosphoserine is present on serine 431. Over residues 447–463 the composition is skewed to polar residues; the sequence is DPSSTPTKIPTDTSTPP. An interaction with SIRT1 region spans residues 450-570; the sequence is STPTKIPTDT…QGLQMFLQQS (121 aa). Phosphothreonine; by CDK5 occurs at positions 451 and 461. Low complexity predominate over residues 478 to 493; it reads SSFSSQSINSQSVGPS. The segment at 514-564 is implicated in the circadian rhythmicity; it reads FQFSAQLGAMQHLKDQLEQRTRMIEANIHRQQEELRKIQEQLQMVHGQGLQ. 3 disordered regions span residues 613–650, 752–791, and 814–855; these read TGQH…SQTP, QQQQ…GQPP, and AFPL…VQPQ. Positions 619 to 650 are enriched in low complexity; it reads QQQTLQSTSTQQSQQSVMSGHSQQTSLPSQTP. Over residues 818 to 837 the composition is skewed to low complexity; that stretch reads QQSTFPPSHHQQHQPQQQQQ. Residues 846-855 are compositionally biased toward polar residues; the sequence is LTDPSKVQPQ. Residue lysine 851 forms a Glycyl lysine isopeptide (Lys-Gly) (interchain with G-Cter in SUMO1) linkage.

As to quaternary structure, component of the circadian clock oscillator which includes the CRY proteins, CLOCK or NPAS2, BMAL1 or BMAL2, CSNK1D and/or CSNK1E, TIMELESS and the PER proteins. Forms a heterodimer with BMAL1. The CLOCK-BMAL1 heterodimer is required for E-box-dependent transactivation, for CLOCK nuclear translocation and degradation, and for phosphorylation of both CLOCK and BMAL1. Interacts with NR3C1 in a ligand-dependent fashion. Interacts with ESR1 and estrogen stimulates this interaction. Interacts with the complex p35/CDK5. Interacts with RELA/p65. Interacts with KAT2B, CREBBP and EP300. Interacts with ID1 and ID3. Interacts with ID2. Interacts with MTA1. Interacts with OGA. Interacts with SIRT1. Interacts with CIPC. Interacts with EZH2. Interacts with EIF4E, PIWIL1 and DDX4. Interacts with PER1, PER2, CRY1 and CRY2 and this interaction requires a translocation to the nucleus. Interaction of the CLOCK-BMAL1 heterodimer with PER or CRY inhibits transcription activation. Interaction of the CLOCK-BMAL1 with CRY1 is independent of DNA but with PER2 is off DNA. The CLOCK-BMAL1 heterodimer interacts with GSK3B. Interacts with KDM5A. Interacts with KMT2A; in a circadian manner. Interacts with MYBBP1A. Interacts with THRAP3. Interacts with MED1; this interaction requires the presence of THRAP3. Interacts with NCOA2. The CLOCK-BMAL1 heterodimer interacts with PASD1. Interacts with NDUFA9. Interacts with IMPDH2; in a circadian manner. Interacts with ASS1; in a circadian manner. Interacts with PIWIL2 (via PIWI domain). Interacts with HNF4A. Ubiquitinated, leading to its proteasomal degradation. Post-translationally, O-glycosylated; contains O-GlcNAc. O-glycosylation by OGT prevents protein degradation by inhibiting ubiquitination. It also stabilizes the CLOCK-BMAL1 heterodimer thereby increasing CLOCK-BMAL1-mediated transcriptional activation of PER1/2/3 and CRY1/2. In terms of processing, phosphorylation is dependent on the CLOCK-BMAL1 heterodimer formation. Phosphorylation enhances the transcriptional activity, alters the subcellular localization and decreases the stability of the heterodimer by promoting its degradation. Phosphorylation shows circadian variations in the liver: the hyperphosphorylated form peaks at midnight (CT18), while the hypophosphorylated form is abundant throughout the day. May be phosphorylated by CSNK1D and CKSN1E. Sumoylation enhances its transcriptional activity and interaction with ESR1, resulting in up-regulation of ESR1 activity. Estrogen stimulates sumoylation. Desumoylation by SENP1 negatively regulates its transcriptional activity. Post-translationally, undergoes lysosome-mediated degradation in a time-dependent manner in the liver. Expressed equally in brain, eye, testes, ovaries, liver, heart, lung, kidney. In the brain, expression is abundant in the suprachiasmatic nuclei (SCN), in the pyriform cortex, and in the hippocampus. Low expression throughout the rest of the brain. Expression does not appear to undergo circadian oscillations.

The protein localises to the nucleus. It is found in the cytoplasm. It localises to the cytosol. It catalyses the reaction L-lysyl-[protein] + acetyl-CoA = N(6)-acetyl-L-lysyl-[protein] + CoA + H(+). Transcriptional activator which forms a core component of the circadian clock. The circadian clock, an internal time-keeping system, regulates various physiological processes through the generation of approximately 24 hour circadian rhythms in gene expression, which are translated into rhythms in metabolism and behavior. It is derived from the Latin roots 'circa' (about) and 'diem' (day) and acts as an important regulator of a wide array of physiological functions including metabolism, sleep, body temperature, blood pressure, endocrine, immune, cardiovascular, and renal function. Consists of two major components: the central clock, residing in the suprachiasmatic nucleus (SCN) of the brain, and the peripheral clocks that are present in nearly every tissue and organ system. Both the central and peripheral clocks can be reset by environmental cues, also known as Zeitgebers (German for 'timegivers'). The predominant Zeitgeber for the central clock is light, which is sensed by retina and signals directly to the SCN. The central clock entrains the peripheral clocks through neuronal and hormonal signals, body temperature and feeding-related cues, aligning all clocks with the external light/dark cycle. Circadian rhythms allow an organism to achieve temporal homeostasis with its environment at the molecular level by regulating gene expression to create a peak of protein expression once every 24 hours to control when a particular physiological process is most active with respect to the solar day. Transcription and translation of core clock components (CLOCK, NPAS2, BMAL1, BMAL2, PER1, PER2, PER3, CRY1 and CRY2) plays a critical role in rhythm generation, whereas delays imposed by post-translational modifications (PTMs) are important for determining the period (tau) of the rhythms (tau refers to the period of a rhythm and is the length, in time, of one complete cycle). A diurnal rhythm is synchronized with the day/night cycle, while the ultradian and infradian rhythms have a period shorter and longer than 24 hours, respectively. Disruptions in the circadian rhythms contribute to the pathology of cardiovascular diseases, cancer, metabolic syndromes and aging. A transcription/translation feedback loop (TTFL) forms the core of the molecular circadian clock mechanism. Transcription factors, CLOCK or NPAS2 and BMAL1 or BMAL2, form the positive limb of the feedback loop, act in the form of a heterodimer and activate the transcription of core clock genes and clock-controlled genes (involved in key metabolic processes), harboring E-box elements (5'-CACGTG-3') within their promoters. The core clock genes: PER1/2/3 and CRY1/2 which are transcriptional repressors form the negative limb of the feedback loop and interact with the CLOCK|NPAS2-BMAL1|BMAL2 heterodimer inhibiting its activity and thereby negatively regulating their own expression. This heterodimer also activates nuclear receptors NR1D1/2 and RORA/B/G, which form a second feedback loop and which activate and repress BMAL1 transcription, respectively. Regulates the circadian expression of ICAM1, VCAM1, CCL2, THPO and MPL and also acts as an enhancer of the transactivation potential of NF-kappaB. Plays an important role in the homeostatic regulation of sleep. The CLOCK-BMAL1 heterodimer regulates the circadian expression of SERPINE1/PAI1, VWF, B3, CCRN4L/NOC, NAMPT, DBP, MYOD1, PPARGC1A, PPARGC1B, SIRT1, GYS2, F7, NGFR, GNRHR, BHLHE40/DEC1, ATF4, MTA1, KLF10 and also genes implicated in glucose and lipid metabolism. Promotes rhythmic chromatin opening, regulating the DNA accessibility of other transcription factors. May play a role in spermatogenesis; contributes to the chromatoid body assembly and physiology. The CLOCK-BMAL2 heterodimer activates the transcription of SERPINE1/PAI1 and BHLHE40/DEC1. The preferred binding motif for the CLOCK-BMAL1 heterodimer is 5'-CACGTGA-3', which contains a flanking adenine nucleotide at the 3-prime end of the canonical 6-nucleotide E-box sequence. CLOCK specifically binds to the half-site 5'-CAC-3', while BMAL1 binds to the half-site 5'-GTGA-3'. The CLOCK-BMAL1 heterodimer also recognizes the non-canonical E-box motifs 5'-AACGTGA-3' and 5'-CATGTGA-3'. CLOCK has an intrinsic acetyltransferase activity, which enables circadian chromatin remodeling by acetylating histones and nonhistone proteins, including its own partner BMAL1. Represses glucocorticoid receptor NR3C1/GR-induced transcriptional activity by reducing the association of NR3C1/GR to glucocorticoid response elements (GREs) via the acetylation of multiple lysine residues located in its hinge region. The acetyltransferase activity of CLOCK is as important as its transcription activity in circadian control. Acetylates metabolic enzymes IMPDH2 and NDUFA9 in a circadian manner. Facilitated by BMAL1, rhythmically interacts and acetylates argininosuccinate synthase 1 (ASS1) leading to enzymatic inhibition of ASS1 as well as the circadian oscillation of arginine biosynthesis and subsequent ureagenesis. Drives the circadian rhythm of blood pressure through transcriptional activation of ATP1B1. The sequence is that of Circadian locomoter output cycles protein kaput (Clock) from Mus musculus (Mouse).